The following is a 398-amino-acid chain: Small ribosomal subunit protein mS29 (398 aa).

A mitochondrion-targeting transit peptide spans 1-21 (MMLKGITRLISRIHKLDPGRF). The disordered stretch occupies residues 39-67 (QVPVESPRAISRTNENDPAKHGDQHEGQH). Residues 52–66 (NENDPAKHGDQHEGQ) show a composition bias toward basic and acidic residues. Residues Met100 and 128-135 (GEKGTGKT) each bind GTP. Lys175 and Lys207 each carry N6-acetyllysine.

This sequence belongs to the mitochondrion-specific ribosomal protein mS29 family. As to quaternary structure, component of the mitochondrial small ribosomal subunit (mt-SSU). Mature mammalian 55S mitochondrial ribosomes consist of a small (28S) and a large (39S) subunit. The 28S small subunit contains a 12S ribosomal RNA (12S mt-rRNA) and 30 different proteins. The 39S large subunit contains a 16S rRNA (16S mt-rRNA), a copy of mitochondrial valine transfer RNA (mt-tRNA(Val)), which plays an integral structural role, and 52 different proteins. Interacts with DELE1. Interacts with NOA1. As to expression, ubiquitous.

The protein resides in the mitochondrion. It catalyses the reaction GTP + H2O = GDP + phosphate + H(+). In terms of biological role, as a component of the mitochondrial small ribosomal subunit, it plays a role in the translation of mitochondrial mRNAs. Involved in mediating interferon-gamma-induced cell death. Displays GTPase activity in vitro. This is Small ribosomal subunit protein mS29 from Homo sapiens (Human).